The sequence spans 234 residues: Large ribosomal subunit protein uL1 (234 aa).

It belongs to the universal ribosomal protein uL1 family. Part of the 50S ribosomal subunit.

Its function is as follows. Binds directly to 23S rRNA. The L1 stalk is quite mobile in the ribosome, and is involved in E site tRNA release. Protein L1 is also a translational repressor protein, it controls the translation of the L11 operon by binding to its mRNA. The polypeptide is Large ribosomal subunit protein uL1 (Helicobacter hepaticus (strain ATCC 51449 / 3B1)).